A 335-amino-acid chain; its full sequence is 7,8-didemethyl-8-hydroxy-5-deazariboflavin synthase (335 aa).

The 246-residue stretch at 1–246 (MTYSKNVFIP…QVAPNLIDPK (246 aa)) folds into the Radical SAM core domain. Residues Cys15, Cys19, and Cys22 each contribute to the [4Fe-4S] cluster site.

The protein belongs to the radical SAM superfamily. CofG family. In terms of assembly, consists of two subunits, CofG and CofH. The cofactor is [4Fe-4S] cluster.

The catalysed reaction is 5-amino-5-(4-hydroxybenzyl)-6-(D-ribitylimino)-5,6-dihydrouracil + S-adenosyl-L-methionine = 7,8-didemethyl-8-hydroxy-5-deazariboflavin + 5'-deoxyadenosine + L-methionine + NH4(+) + H(+). The protein operates within cofactor biosynthesis; coenzyme F0 biosynthesis. Functionally, catalyzes the radical-mediated synthesis of 7,8-didemethyl-8-hydroxy-5-deazariboflavin from 5-amino-5-(4-hydroxybenzyl)-6-(D-ribitylimino)-5,6-dihydrouracil. This is 7,8-didemethyl-8-hydroxy-5-deazariboflavin synthase from Methanosarcina mazei (strain ATCC BAA-159 / DSM 3647 / Goe1 / Go1 / JCM 11833 / OCM 88) (Methanosarcina frisia).